Reading from the N-terminus, the 369-residue chain is Gibberellin 3-beta-dioxygenase 2-3 (369 aa).

Residues 205–306 (MTATMHLNWY…RISLGYFLGP (102 aa)) enclose the Fe2OG dioxygenase domain. Residues His-229, Asp-231, and His-287 each contribute to the Fe cation site. Residue Arg-297 is part of the active site.

Belongs to the iron/ascorbate-dependent oxidoreductase family. GA3OX subfamily. It depends on L-ascorbate as a cofactor. Requires Fe cation as cofactor.

It catalyses the reaction gibberellin A20 + 2-oxoglutarate + O2 = gibberellin A1 + succinate + CO2. Functionally, converts the inactive gibberellin precursors GA9 and GA20 in the bioactives gibberellins GA4 and GA1. In Triticum aestivum (Wheat), this protein is Gibberellin 3-beta-dioxygenase 2-3 (GA3ox2-3).